The chain runs to 89 residues: HssA/B-like protein 22 (89 aa).

This sequence belongs to the hssA/B family.

The protein is HssA/B-like protein 22 (hssl22) of Dictyostelium discoideum (Social amoeba).